The sequence spans 156 residues: Cyanate hydratase (156 aa).

Catalysis depends on residues R96, E99, and S122.

The protein belongs to the cyanase family.

It carries out the reaction cyanate + hydrogencarbonate + 3 H(+) = NH4(+) + 2 CO2. Functionally, catalyzes the reaction of cyanate with bicarbonate to produce ammonia and carbon dioxide. The polypeptide is Cyanate hydratase (Burkholderia thailandensis (strain ATCC 700388 / DSM 13276 / CCUG 48851 / CIP 106301 / E264)).